The sequence spans 393 residues: MTVPSTRKDLMIVNMGPHHPSMHGVLRLIVTLDGEDVIDCEPILGYLHRGMEKIAENRTIIQYLPYVTRWDYLATMFTEAITVNAPEQLGNIQVPKRASYIRVIMLELSRIASHLLWLGPFMADIGAQTPFFYIFRERELIYDLFEAATGMRMMHNFFRIGGVAADLPHGWIDKCLDFCDYFLTGIAEYQKLITRNPIFLERVEGVGIIGGEEAINWGLSGPMLRASGIQWDLRKVDHYECYDEFDWEVQWQKEGDSLARYLVRISEMTESIKIIQQALEGIPGGPYENLEIRRFDRVKDTVWNEFDYRFISKKPSPTFELSKQELYARVEAPKGELGIFLIGDKGVFPWRYKIRPPGFINLQILPQLVKRMKLADIMTILGSIDIIMGEVDR.

The protein belongs to the complex I 49 kDa subunit family. NDH is composed of at least 16 different subunits, 5 of which are encoded in the nucleus.

The protein resides in the plastid. It localises to the chloroplast thylakoid membrane. It catalyses the reaction a plastoquinone + NADH + (n+1) H(+)(in) = a plastoquinol + NAD(+) + n H(+)(out). It carries out the reaction a plastoquinone + NADPH + (n+1) H(+)(in) = a plastoquinol + NADP(+) + n H(+)(out). Functionally, NDH shuttles electrons from NAD(P)H:plastoquinone, via FMN and iron-sulfur (Fe-S) centers, to quinones in the photosynthetic chain and possibly in a chloroplast respiratory chain. The immediate electron acceptor for the enzyme in this species is believed to be plastoquinone. Couples the redox reaction to proton translocation, and thus conserves the redox energy in a proton gradient. This Guizotia abyssinica (Niger) protein is NAD(P)H-quinone oxidoreductase subunit H, chloroplastic.